The primary structure comprises 306 residues: Protein farnesyltransferase/geranylgeranyltransferase type-1 subunit alpha (306 aa).

PFTA repeat units lie at residues 48–82, 84–118, 125–159, 161–195, and 201–235; these read YSER…NLPN, NLYD…QIME, DPYR…TFDL, NDAK…SKKH, and TIDE…RFDR.

The protein belongs to the protein prenyltransferase subunit alpha family. Heterodimer of an alpha and a beta subunit. Mg(2+) is required as a cofactor.

It catalyses the reaction L-cysteinyl-[protein] + (2E,6E)-farnesyl diphosphate = S-(2E,6E)-farnesyl-L-cysteinyl-[protein] + diphosphate. It carries out the reaction geranylgeranyl diphosphate + L-cysteinyl-[protein] = S-geranylgeranyl-L-cysteinyl-[protein] + diphosphate. Its function is as follows. Essential subunit of both the farnesyltransferase and the geranylgeranyltransferase complex. Contributes to the transfer of a farnesyl or geranylgeranyl moiety from farnesyl or geranylgeranyl diphosphate to a cysteine at the fourth position from the C-terminus of several proteins having the C-terminal sequence Cys-aliphatic-aliphatic-X. The polypeptide is Protein farnesyltransferase/geranylgeranyltransferase type-1 subunit alpha (RAM2) (Candida albicans (Yeast)).